Reading from the N-terminus, the 460-residue chain is Sexual development regulator velC (460 aa).

3 disordered regions span residues Val67–Pro131, Tyr152–Pro216, and Lys422–Gln460. Positions Pro192 to Val207 are enriched in polar residues. The region spanning Leu239–Lys422 is the Velvet domain. The segment covering Lys423 to Ser437 has biased composition (basic and acidic residues). The segment covering Gly451–Gln460 has biased composition (basic residues).

It belongs to the velvet family. VelC subfamily. Interacts with VE1.

The protein localises to the nucleus. Its function is as follows. Velvet-domain-containing protein that acts as a positive regulator of sexual development. Dispensable for regulation of conidial size, hyphal hydrophobicity, fumonisin production, and oxidant resistance. This chain is Sexual development regulator velC, found in Gibberella moniliformis (strain M3125 / FGSC 7600) (Maize ear and stalk rot fungus).